A 397-amino-acid polypeptide reads, in one-letter code: Mannonate dehydratase 2 (397 aa).

It belongs to the mannonate dehydratase family. Requires Fe(2+) as cofactor. Mn(2+) is required as a cofactor.

The catalysed reaction is D-mannonate = 2-dehydro-3-deoxy-D-gluconate + H2O. The protein operates within carbohydrate metabolism; pentose and glucuronate interconversion. Its function is as follows. Catalyzes the dehydration of D-mannonate. The polypeptide is Mannonate dehydratase 2 (uxuA2) (Agrobacterium fabrum (strain C58 / ATCC 33970) (Agrobacterium tumefaciens (strain C58))).